The sequence spans 243 residues: PF03932 family protein CutC (243 aa).

This sequence belongs to the CutC family.

The protein resides in the cytoplasm. The protein is PF03932 family protein CutC of Glaesserella parasuis serovar 5 (strain SH0165) (Haemophilus parasuis).